The following is a 395-amino-acid chain: Elongation factor Tu (395 aa).

The region spanning 10 to 204 (KSHVNIGTIG…AVDEYIPTPE (195 aa)) is the tr-type G domain. The G1 stretch occupies residues 19-26 (GHVDHGKT). Position 19–26 (19–26 (GHVDHGKT)) interacts with GTP. Thr-26 provides a ligand contact to Mg(2+). The tract at residues 60–64 (GITIN) is G2. The segment at 81–84 (DCPG) is G3. GTP-binding positions include 81 to 85 (DCPGH) and 136 to 139 (NKMD). Positions 136–139 (NKMD) are G4. A G5 region spans residues 174-176 (SAL).

This sequence belongs to the TRAFAC class translation factor GTPase superfamily. Classic translation factor GTPase family. EF-Tu/EF-1A subfamily. Monomer.

It is found in the cytoplasm. The catalysed reaction is GTP + H2O = GDP + phosphate + H(+). In terms of biological role, GTP hydrolase that promotes the GTP-dependent binding of aminoacyl-tRNA to the A-site of ribosomes during protein biosynthesis. In Enterococcus faecalis (strain ATCC 700802 / V583), this protein is Elongation factor Tu.